The primary structure comprises 778 residues: Arf-GAP with coiled-coil, ANK repeat and PH domain-containing protein 2 (778 aa).

The region spanning 1-226 is the BAR domain; that stretch reads MKMTVDFEEC…MKDLGAQLDR (226 aa). A PH domain is found at 266 to 361; sequence GIVMEGYLFK…WIKAVQTSIA (96 aa). Residues 371–391 are disordered; sequence SEKLDKKSSPSTGSLDSGNES. Polar residues predominate over residues 379–388; that stretch reads SPSTGSLDSG. 2 positions are modified to phosphoserine: S384 and S387. One can recognise an Arf-GAP domain in the interval 399–520; the sequence is ESALQRVQCI…KFVDKYSISL (122 aa). Residues 414 to 437 form a C4-type zinc finger; it reads CCDCGLADPRWASINLGITLCIEC. S521 is modified (phosphoserine). The segment at 540–599 is disordered; it reads SISKFGPGDQVRASAQSSVRSNDSGIQQSSDDGRESLPSTVSANSLYEPEGERQDSSMFL. The span at 552 to 569 shows a compositional bias: polar residues; that stretch reads ASAQSSVRSNDSGIQQSS. Phosphoserine is present on residues S581 and S584. 3 ANK repeats span residues 640–669, 673–702, and 706–735; these read NKAT…NVNQ, QGRG…NQHA, and EGKD…NEEM. Y742 is modified (phosphotyrosine). A Phosphoserine modification is found at S775.

As to quaternary structure, interacts (via KANK domains) with RAB35 (GTP-bound form); the interaction is direct and probably recruits ACAP2 to membranes including plasma membrane. Interacts with MICALL1; the interaction is indirect through RAB35. As to expression, widely expressed. Highest level in lung.

Its subcellular location is the cell membrane. The protein localises to the endosome membrane. Its activity is regulated as follows. GAP activity stimulated by phosphatidylinositol 4,5-bisphosphate (PIP2) and phosphatidic acid. GTPase-activating protein (GAP) for ADP ribosylation factor 6 (ARF6). Doesn't show GAP activity for RAB35. The polypeptide is Arf-GAP with coiled-coil, ANK repeat and PH domain-containing protein 2 (ACAP2) (Homo sapiens (Human)).